The following is a 701-amino-acid chain: Pseudouridylate synthase PUS7L (701 aa).

At Ser79 the chain carries Phosphoserine. The active-site Nucleophile is the Asp339. The TRUD domain maps to 424–647 (GFVNYYGPQR…PGCYRQILKH (224 aa)).

The protein belongs to the pseudouridine synthase TruD family.

It catalyses the reaction a uridine in mRNA = a pseudouridine in mRNA. Pseudouridine synthase that catalyzes pseudouridylation of mRNAs. This is Pseudouridylate synthase PUS7L from Homo sapiens (Human).